An 86-amino-acid polypeptide reads, in one-letter code: Small ribosomal subunit protein bS16 (86 aa).

Belongs to the bacterial ribosomal protein bS16 family.

The protein is Small ribosomal subunit protein bS16 of Borrelia garinii subsp. bavariensis (strain ATCC BAA-2496 / DSM 23469 / PBi) (Borreliella bavariensis).